The sequence spans 874 residues: Probable inorganic carbon transporter subunit DabA (874 aa).

The Zn(2+) site is built by C398, D400, H580, and C595.

The protein belongs to the inorganic carbon transporter (TC 9.A.2) DabA family. In terms of assembly, forms a complex with DabB. It depends on Zn(2+) as a cofactor.

The protein resides in the cell membrane. Functionally, part of an energy-coupled inorganic carbon pump. This chain is Probable inorganic carbon transporter subunit DabA, found in Bacillus cereus (strain AH187).